Reading from the N-terminus, the 276-residue chain is NADPH-dependent 7-cyano-7-deazaguanine reductase (276 aa).

Substrate is bound at residue Ile83 to Ser85. Ser85 to Lys86 serves as a coordination point for NADPH. The active-site Thioimide intermediate is the Cys184. The active-site Proton donor is the Asp191. Residue His223–Glu224 coordinates substrate. Arg252–Gly253 serves as a coordination point for NADPH.

This sequence belongs to the GTP cyclohydrolase I family. QueF type 2 subfamily. In terms of assembly, homodimer.

It localises to the cytoplasm. It catalyses the reaction 7-aminomethyl-7-carbaguanine + 2 NADP(+) = 7-cyano-7-deazaguanine + 2 NADPH + 3 H(+). The protein operates within tRNA modification; tRNA-queuosine biosynthesis. Catalyzes the NADPH-dependent reduction of 7-cyano-7-deazaguanine (preQ0) to 7-aminomethyl-7-deazaguanine (preQ1). The sequence is that of NADPH-dependent 7-cyano-7-deazaguanine reductase from Pseudomonas paraeruginosa (strain DSM 24068 / PA7) (Pseudomonas aeruginosa (strain PA7)).